A 124-amino-acid polypeptide reads, in one-letter code: Ribonuclease pancreatic (124 aa).

Positions 1–13 (KESAAAKFERQHM) are enriched in basic and acidic residues. Residues 1–25 (KESAAAKFERQHMDPSPSSASSSNY) are disordered. Residues lysine 7 and arginine 10 each coordinate substrate. Histidine 12 serves as the catalytic Proton acceptor. Intrachain disulfides connect cysteine 26/cysteine 84, cysteine 40/cysteine 95, cysteine 58/cysteine 110, and cysteine 65/cysteine 72. N-linked (GlcNAc...) asparagine; partial glycosylation occurs at asparagine 34. Substrate is bound by residues 41 to 45 (KPVNT), lysine 66, and arginine 85. Histidine 119 acts as the Proton donor in catalysis.

This sequence belongs to the pancreatic ribonuclease family. Monomer. Interacts with and forms tight 1:1 complexes with RNH1. Dimerization of two such complexes may occur. Interaction with RNH1 inhibits this protein. In terms of tissue distribution, pancreas.

It is found in the secreted. It catalyses the reaction an [RNA] containing cytidine + H2O = an [RNA]-3'-cytidine-3'-phosphate + a 5'-hydroxy-ribonucleotide-3'-[RNA].. The catalysed reaction is an [RNA] containing uridine + H2O = an [RNA]-3'-uridine-3'-phosphate + a 5'-hydroxy-ribonucleotide-3'-[RNA].. Functionally, endonuclease that catalyzes the cleavage of RNA on the 3' side of pyrimidine nucleotides. Acts on single-stranded and double-stranded RNA. The sequence is that of Ribonuclease pancreatic (RNASE1) from Capreolus capreolus (European roe deer).